A 163-amino-acid chain; its full sequence is Transcription elongation factor GreA (163 aa).

Residues 49 to 80 (ENAEYDAARDRQSEVERRILELERILENAEII) are a coiled coil.

Belongs to the GreA/GreB family.

Necessary for efficient RNA polymerase transcription elongation past template-encoded arresting sites. The arresting sites in DNA have the property of trapping a certain fraction of elongating RNA polymerases that pass through, resulting in locked ternary complexes. Cleavage of the nascent transcript by cleavage factors such as GreA or GreB allows the resumption of elongation from the new 3'terminus. GreA releases sequences of 2 to 3 nucleotides. The chain is Transcription elongation factor GreA from Mycoplasmopsis agalactiae (strain NCTC 10123 / CIP 59.7 / PG2) (Mycoplasma agalactiae).